The primary structure comprises 60 residues: Sec-independent protein translocase protein TatA (60 aa).

A helical membrane pass occupies residues 1 to 21; it reads MAGLGVTELLIILAIVIVLFG.

It belongs to the TatA/E family. In terms of assembly, forms a complex with TatC.

Its subcellular location is the cell membrane. Its function is as follows. Part of the twin-arginine translocation (Tat) system that transports large folded proteins containing a characteristic twin-arginine motif in their signal peptide across membranes. TatA could form the protein-conducting channel of the Tat system. This chain is Sec-independent protein translocase protein TatA, found in Herpetosiphon aurantiacus (strain ATCC 23779 / DSM 785 / 114-95).